Consider the following 428-residue polypeptide: Adenylosuccinate synthetase (428 aa).

GTP contacts are provided by residues 12 to 18 (GDEGKGK) and 40 to 42 (GHT). Aspartate 13 functions as the Proton acceptor in the catalytic mechanism. Aspartate 13 and glycine 40 together coordinate Mg(2+). IMP-binding positions include 13 to 16 (DEGK), 38 to 41 (NAGH), threonine 128, arginine 142, glutamine 222, threonine 237, and arginine 301. The active-site Proton donor is histidine 41. A substrate-binding site is contributed by 297 to 303 (VNTGRAR). GTP-binding positions include arginine 303, 329 to 331 (KLD), and 411 to 413 (STS).

The protein belongs to the adenylosuccinate synthetase family. In terms of assembly, homodimer. It depends on Mg(2+) as a cofactor.

The protein localises to the cytoplasm. The enzyme catalyses IMP + L-aspartate + GTP = N(6)-(1,2-dicarboxyethyl)-AMP + GDP + phosphate + 2 H(+). It functions in the pathway purine metabolism; AMP biosynthesis via de novo pathway; AMP from IMP: step 1/2. Functionally, plays an important role in the de novo pathway of purine nucleotide biosynthesis. Catalyzes the first committed step in the biosynthesis of AMP from IMP. The chain is Adenylosuccinate synthetase from Caulobacter sp. (strain K31).